We begin with the raw amino-acid sequence, 400 residues long: PHD finger protein 24 (400 aa).

Residue glycine 2 is the site of N-myristoyl glycine attachment. Positions 30 to 108 are disordered; the sequence is DRPSIRRTGE…FTPPAFIRPT (79 aa). Omega-N-methylarginine is present on arginine 36. At serine 43 the chain carries Phosphoserine. Threonine 47 is subject to Phosphothreonine. Serine 51 carries the phosphoserine modification. Residues 78–97 show a composition bias toward basic and acidic residues; the sequence is AWERLRDGRGVEPEEFDRTG. The segment at 129 to 190 adopts a PHD-type zinc-finger fold; sequence NDEMCDVCEV…TGWSCHYCDN (62 aa).

The polypeptide is PHD finger protein 24 (Pongo abelii (Sumatran orangutan)).